Here is a 433-residue protein sequence, read N- to C-terminus: Ligand-dependent corepressor (433 aa).

Residues 1 to 147 are disordered; sequence MQRMIQQFAA…GTREGFGHST (147 aa). Over residues 13-34 the composition is skewed to polar residues; that stretch reads TSKTSSTQDPSQPNSTKNQSLP. Residues 36–48 are compositionally biased toward low complexity; that stretch reads ASPVTTSPTAATT. Phosphoserine is present on serine 42. The Interaction with nuclear receptors motif lies at 53-57; that stretch reads LSKLL. Phosphoserine is present on serine 63. The segment covering 88 to 110 has biased composition (polar residues); that stretch reads KKSPCASSTSLSHSPGCSSTQGN. At serine 249 the chain carries Phosphoserine. A Glycyl lysine isopeptide (Lys-Gly) (interchain with G-Cter in SUMO2) cross-link involves residue lysine 254. Positions 299-348 are disordered; the sequence is QNRKSMLDAGPDSWGSDAEQSTSGQPYPTSDQEGDPGSKQPRKKRGRYRQ. Residues 316 to 329 are compositionally biased toward polar residues; it reads AEQSTSGQPYPTSD. Positions 339 to 345 match the Nuclear localization signal motif; the sequence is PRKKRGR. The HTH psq-type domain maps to 340–392; sequence RKKRGRYRQYNSEILEEAISVVMSGKMSVSKAQSIYGIPHSTLEYKVKERLGT. Positions 368–388 form a DNA-binding region, H-T-H motif; the sequence is VSKAQSIYGIPHSTLEYKVKE. The segment at 393 to 412 is disordered; the sequence is LKNPPKKKMKLMRSEGPDVS. Lysine 414 participates in a covalent cross-link: Glycyl lysine isopeptide (Lys-Gly) (interchain with G-Cter in SUMO2).

In terms of assembly, interacts with ESR1 and ESR2 in the presence of estradiol. Interacts with CTBP1, HDAC3 and HDAC6. Component of a large corepressor complex that contains about 20 proteins, including CTBP1, CTBP2, HDAC1 and HDAC2. In terms of tissue distribution, detected in heart and kidney.

It localises to the nucleus. Its function is as follows. Repressor of ligand-dependent transcription activation by various nuclear repressors. Repressor of ligand-dependent transcription activation by ESR1, ESR2, NR3C1, PGR, RARA, RARB, RARG, RXRA and VDR. May act as transcription activator that binds DNA elements with the sequence 5'-CCCTATCGATCGATCTCTACCT-3'. The polypeptide is Ligand-dependent corepressor (Lcor) (Mus musculus (Mouse)).